The sequence spans 407 residues: D-inositol 3-phosphate glycosyltransferase (407 aa).

Histidine 2 contacts 1D-myo-inositol 3-phosphate. Residues glutamine 8–proline 9 and glycine 16 contribute to the UDP-N-acetyl-alpha-D-glucosamine site. Residues aspartate 13–asparagine 18, arginine 71, tyrosine 104, threonine 128, and arginine 148 contribute to the 1D-myo-inositol 3-phosphate site. The UDP-N-acetyl-alpha-D-glucosamine site is built by arginine 222 and lysine 227. Residues tyrosine 297, arginine 298, and alanine 300 each contribute to the Mg(2+) site. Residues glutamate 310 and glutamate 318 each coordinate UDP-N-acetyl-alpha-D-glucosamine. Residue threonine 324 coordinates Mg(2+).

This sequence belongs to the glycosyltransferase group 1 family. MshA subfamily. As to quaternary structure, homodimer.

It catalyses the reaction 1D-myo-inositol 3-phosphate + UDP-N-acetyl-alpha-D-glucosamine = 1D-myo-inositol 2-acetamido-2-deoxy-alpha-D-glucopyranoside 3-phosphate + UDP + H(+). Its function is as follows. Catalyzes the transfer of a N-acetyl-glucosamine moiety to 1D-myo-inositol 3-phosphate to produce 1D-myo-inositol 2-acetamido-2-deoxy-glucopyranoside 3-phosphate in the mycothiol biosynthesis pathway. This Frankia alni (strain DSM 45986 / CECT 9034 / ACN14a) protein is D-inositol 3-phosphate glycosyltransferase.